We begin with the raw amino-acid sequence, 940 residues long: Isoleucine--tRNA ligase (940 aa).

Residues proline 58–histidine 68 carry the 'HIGH' region motif. Glutamate 564 is a binding site for L-isoleucyl-5'-AMP. The 'KMSKS' region signature appears at lysine 605–serine 609. Residue lysine 608 participates in ATP binding. Residues cysteine 903, cysteine 906, cysteine 923, and cysteine 926 each contribute to the Zn(2+) site.

It belongs to the class-I aminoacyl-tRNA synthetase family. IleS type 1 subfamily. In terms of assembly, monomer. Zn(2+) serves as cofactor.

It is found in the cytoplasm. The enzyme catalyses tRNA(Ile) + L-isoleucine + ATP = L-isoleucyl-tRNA(Ile) + AMP + diphosphate. In terms of biological role, catalyzes the attachment of isoleucine to tRNA(Ile). As IleRS can inadvertently accommodate and process structurally similar amino acids such as valine, to avoid such errors it has two additional distinct tRNA(Ile)-dependent editing activities. One activity is designated as 'pretransfer' editing and involves the hydrolysis of activated Val-AMP. The other activity is designated 'posttransfer' editing and involves deacylation of mischarged Val-tRNA(Ile). The chain is Isoleucine--tRNA ligase from Shewanella sp. (strain W3-18-1).